The primary structure comprises 304 residues: Acetylglutamate kinase (304 aa).

Substrate contacts are provided by residues 82 to 83 (GG), Arg104, and Asn197.

It belongs to the acetylglutamate kinase family. ArgB subfamily.

It localises to the cytoplasm. The catalysed reaction is N-acetyl-L-glutamate + ATP = N-acetyl-L-glutamyl 5-phosphate + ADP. The protein operates within amino-acid biosynthesis; L-arginine biosynthesis; N(2)-acetyl-L-ornithine from L-glutamate: step 2/4. Its function is as follows. Catalyzes the ATP-dependent phosphorylation of N-acetyl-L-glutamate. This chain is Acetylglutamate kinase, found in Prochlorococcus marinus (strain NATL2A).